Here is a 212-residue protein sequence, read N- to C-terminus: Uridine kinase (212 aa).

An ATP-binding site is contributed by 13-20; the sequence is GASASGKS.

It belongs to the uridine kinase family.

It is found in the cytoplasm. The catalysed reaction is uridine + ATP = UMP + ADP + H(+). The enzyme catalyses cytidine + ATP = CMP + ADP + H(+). It functions in the pathway pyrimidine metabolism; CTP biosynthesis via salvage pathway; CTP from cytidine: step 1/3. The protein operates within pyrimidine metabolism; UMP biosynthesis via salvage pathway; UMP from uridine: step 1/1. This Shewanella piezotolerans (strain WP3 / JCM 13877) protein is Uridine kinase.